Here is a 378-residue protein sequence, read N- to C-terminus: UPF0754 membrane protein BCE33L0760 (378 aa).

The next 2 membrane-spanning stretches (helical) occupy residues 1–21 (MNIW…GGFT) and 357–377 (YLGA…LLFL).

This sequence belongs to the UPF0754 family.

The protein resides in the cell membrane. The polypeptide is UPF0754 membrane protein BCE33L0760 (Bacillus cereus (strain ZK / E33L)).